Here is a 459-residue protein sequence, read N- to C-terminus: MAATSSTSSQSFDIELDIIGQQPPLLSIYTQISLVYPVSDPSQYPTIVSTLEEGLKRLSQTFPWVAGQVKTEGISEGNTGTSKIIPYEETPRLVVKDLRDDSSAPTIEGLRKAGFPLEMFDENVVAPRKTLAIGPGNGPNDPKPVLLLQLNFIKGGLILTVNGQHGAMDMTGQDAIIRLLSKACRNESFTEEEISAMNLDRKTVVPLLENYKVGPELDHQIAKPAPAGDAPPAPAKATWAFFSFTPKALSELKDAATKTLDASSKFVSTDDALSAFIWQSTSRVRLARLDASTPTEFCRAVDMRGPMGVSSTYPGLLQNMTYHDSTVAEIANEPLGATASRLRSELNSDRLRRRTQALATYMHGLPDKSSVSLTADANPSSSIMLSSWAKVGCWEYDFGFGLGKPESVRRPRFEPFESLMYFMPKKPDGEFTASISLRDEDMERLKADEEWTKYAKYIG.

Asp218 and Ile221 together coordinate Ca(2+). CoA contacts are provided by residues Lys253, 266 to 269 (FVST), Asp302, Gln318, and Arg343. Asp376 is a binding site for Ca(2+). CoA-binding residues include Ser386 and Lys390. Glu449 is a binding site for Ca(2+).

The protein belongs to the trichothecene 3-O-acetyltransferase family.

Its pathway is sesquiterpene biosynthesis; trichothecene biosynthesis. In terms of biological role, 3-O-acetyltransferase involved in the biosynthesis of trichothecenes, a very large family of chemically related bicyclic sesquiterpene compounds acting as mycotoxins, including T2-toxin. The biosynthesis of trichothecenes begins with the cyclization of farnesyl diphosphate to trichodiene and is catalyzed by the trichodiene synthase TRI5. Trichodiene undergoes a series of oxygenations catalyzed by the cytochrome P450 monooxygenase TRI4. TRI4 controls the addition of four oxygens at C-2, C-3, C-11, and the C-12, C-13-epoxide to form the intermediate isotrichotriol. Isotrichotriol then undergoes a non-enzymatic isomerization and cyclization to form isotrichodermol. During this process, the oxygen at the C-2 position becomes the pyran ring oxygen and the hydroxyl group at C-11 is lost. More complex type A trichothecenes are built by modifying isotrichodermol through a series of paired hydroxylation and acetylation or acylation steps. Isotrichodermol is converted to isotrichodermin by the acetyltransferase TRI101. TRI101 encodes a C-3 transacetylase that acts as a self-protection or resistance factor during biosynthesis and that the presence of a free C-3 hydroxyl group is a key component of Fusarium trichothecene phytotoxicity. A second hydroxyl group is added to C-15 by the trichothecene C-15 hydroxylase TRI11, producing 15-decalonectrin, which is then acetylated by TRI3, producing calonectrin. A third hydroxyl group is added at C-4 by the cytochrome P450 monooxygenase TRI13, converting calonectrin to 3,15-diacetoxyspirpenol, which is subsequently acetylated bythe acetyltransferase TRI7. A fourth hydroxyl group is added to C-8 by the cytochrome P450 monooxygenase TRI1, followed by the addition of an isovaleryl moiety by TRI16. Finally, the acetyl group is removed from the C-3 position by the trichothecene C-3 esterase TRI8 to produce T-2 toxin. The sequence is that of Trichothecene 3-O-acetyltransferase TRI101 from Fusarium sporotrichioides.